We begin with the raw amino-acid sequence, 132 residues long: Cytochrome b5 (132 aa).

The Cytochrome b5 heme-binding domain maps to 2-78 (GKIFTLAEVA…LDEYYVGDID (77 aa)). Residues His-37 and His-61 each contribute to the heme site. Residues 104–124 (FVIKLLQFLVPLVILAGAIGI) form a helical membrane-spanning segment.

Belongs to the cytochrome b5 family.

The protein localises to the endoplasmic reticulum membrane. It is found in the microsome membrane. Functionally, membrane bound hemoprotein which function as an electron carrier for several membrane bound oxygenases. The sequence is that of Cytochrome b5 from Borago officinalis (Bourrache).